The following is a 609-amino-acid chain: mRNA-decapping enzyme 1B (609 aa).

Ala2 is subject to N-acetylalanine. Position 147 is a phosphoserine (Ser147). At Tyr191 the chain carries Phosphotyrosine. Disordered stretches follow at residues 201–222 and 243–264; these read PVKP…LDPE and TVEP…LPIR. Residues 205–219 show a composition bias toward polar residues; sequence SENQQQRIPQPNQTL. A phosphoserine mark is found at Ser272 and Ser333. 2 disordered regions span residues 326-345 and 359-438; these read TGPV…GVQN and TPGA…SSGV. Positions 336-345 are enriched in polar residues; sequence NIGTSRGVQN. The span at 368–378 shows a compositional bias: low complexity; sequence PSTPAPASSAA. A Phosphothreonine modification is found at Thr389. Polar residues predominate over residues 418 to 438; that stretch reads QSTLPRQTLPISGNQTGSSGV. Phosphoserine occurs at positions 440 and 503.

It belongs to the DCP1 family. In terms of assembly, interacts with DCP1A.

The protein resides in the cytoplasm. It localises to the nucleus. The enzyme catalyses a 5'-end (N(7)-methyl 5'-triphosphoguanosine)-ribonucleoside in mRNA + H2O = N(7)-methyl-GDP + a 5'-end phospho-ribonucleoside in mRNA + 2 H(+). Its function is as follows. May play a role in the degradation of mRNAs, both in normal mRNA turnover and in nonsense-mediated mRNA decay. May remove the 7-methyl guanine cap structure from mRNA molecules, yielding a 5'-phosphorylated mRNA fragment and 7m-GDP. This chain is mRNA-decapping enzyme 1B (DCP1B), found in Pongo abelii (Sumatran orangutan).